The chain runs to 322 residues: N-acetyl-gamma-glutamyl-phosphate reductase (322 aa).

Residue Cys-132 is part of the active site.

It belongs to the NAGSA dehydrogenase family. Type 1 subfamily.

Its subcellular location is the cytoplasm. The enzyme catalyses N-acetyl-L-glutamate 5-semialdehyde + phosphate + NADP(+) = N-acetyl-L-glutamyl 5-phosphate + NADPH + H(+). It participates in amino-acid biosynthesis; L-arginine biosynthesis; N(2)-acetyl-L-ornithine from L-glutamate: step 3/4. In terms of biological role, catalyzes the NADPH-dependent reduction of N-acetyl-5-glutamyl phosphate to yield N-acetyl-L-glutamate 5-semialdehyde. The protein is N-acetyl-gamma-glutamyl-phosphate reductase of Bacteroides thetaiotaomicron (strain ATCC 29148 / DSM 2079 / JCM 5827 / CCUG 10774 / NCTC 10582 / VPI-5482 / E50).